A 246-amino-acid chain; its full sequence is Acetoacetate decarboxylase (246 aa).

The Schiff-base intermediate with acetoacetate role is filled by K116.

The protein belongs to the ADC family.

It carries out the reaction acetoacetate + H(+) = acetone + CO2. Functionally, catalyzes the conversion of acetoacetate to acetone and carbon dioxide. This chain is Acetoacetate decarboxylase, found in Burkholderia vietnamiensis (strain G4 / LMG 22486) (Burkholderia cepacia (strain R1808)).